The primary structure comprises 254 residues: Small ribosomal subunit protein uS2 (254 aa).

Residues 228–254 (DRGAEKEVEAAEEAPAAEAEAAPATEE) are disordered. Residues 240 to 254 (EAPAAEAEAAPATEE) show a composition bias toward low complexity.

It belongs to the universal ribosomal protein uS2 family.

The sequence is that of Small ribosomal subunit protein uS2 from Flavobacterium johnsoniae (strain ATCC 17061 / DSM 2064 / JCM 8514 / BCRC 14874 / CCUG 350202 / NBRC 14942 / NCIMB 11054 / UW101) (Cytophaga johnsonae).